The primary structure comprises 460 residues: UDP-N-acetylmuramoylalanine--D-glutamate ligase (460 aa).

ATP is bound at residue 120–126; the sequence is GSNGKTT.

It belongs to the MurCDEF family.

It is found in the cytoplasm. It carries out the reaction UDP-N-acetyl-alpha-D-muramoyl-L-alanine + D-glutamate + ATP = UDP-N-acetyl-alpha-D-muramoyl-L-alanyl-D-glutamate + ADP + phosphate + H(+). It participates in cell wall biogenesis; peptidoglycan biosynthesis. In terms of biological role, cell wall formation. Catalyzes the addition of glutamate to the nucleotide precursor UDP-N-acetylmuramoyl-L-alanine (UMA). The protein is UDP-N-acetylmuramoylalanine--D-glutamate ligase of Lactobacillus delbrueckii subsp. bulgaricus (strain ATCC 11842 / DSM 20081 / BCRC 10696 / JCM 1002 / NBRC 13953 / NCIMB 11778 / NCTC 12712 / WDCM 00102 / Lb 14).